Consider the following 58-residue polypeptide: Ribulose bisphosphate carboxylase large chain (58 aa).

Positions 1–2 are excised as a propeptide; it reads MS. Residue P3 is modified to N-acetylproline. K14 carries the post-translational modification N6,N6,N6-trimethyllysine.

It belongs to the RuBisCO large chain family. Type I subfamily. Heterohexadecamer of 8 large chains and 8 small chains.

The protein localises to the plastid. Its subcellular location is the chloroplast. The enzyme catalyses 2 (2R)-3-phosphoglycerate + 2 H(+) = D-ribulose 1,5-bisphosphate + CO2 + H2O. It carries out the reaction D-ribulose 1,5-bisphosphate + O2 = 2-phosphoglycolate + (2R)-3-phosphoglycerate + 2 H(+). In terms of biological role, ruBisCO catalyzes two reactions: the carboxylation of D-ribulose 1,5-bisphosphate, the primary event in carbon dioxide fixation, as well as the oxidative fragmentation of the pentose substrate in the photorespiration process. Both reactions occur simultaneously and in competition at the same active site. The protein is Ribulose bisphosphate carboxylase large chain (rbcL) of Euphorbia characias (Albanian spurge).